We begin with the raw amino-acid sequence, 446 residues long: MAKKLFIETHGCQMNEYDSSRMADLLGEHQALEVTENAAEADVILLNTCSIREKAQEKVFSKLGMWRDLKQQNPDLVIGVGGCVASQEGAAIRERAPYVDVVFGPQTLHRLPEMIDAARSTRKPQVDVSFPEIEKFDRLPEPRVDGPTAFVSVMEGCSKYCSFCVVPYTRGEEVSRPFDDVIAEVIHLAENGVREVTLLGQNVNGFRGQTHDGRLADFAELLRVVAAVDGIERIRYTTSHPLEFSDALIQAHAEVPELVKFIHLPVQSGSDRVLAAMKRNHTVLEYKSRIRKLKAAVPDICISSDFIVGFPGETEKDFEQTMKLVEEVGFDFSFSFIYSARPGTPAADLADDLPEEVKKRRLQILQGRIHQQGYEISRRMVGSTQRILVTDFSKKDPGMLQGRTENNRIVNFRCDNPRLIGQFAQVHIDDALPHSLRGTLIEGTLH.

An MTTase N-terminal domain is found at 3–120; sequence KKLFIETHGC…LPEMIDAARS (118 aa). Positions 12, 49, 83, 157, 161, and 164 each coordinate [4Fe-4S] cluster. In terms of domain architecture, Radical SAM core spans 143–375; sequence RVDGPTAFVS…QGRIHQQGYE (233 aa). A TRAM domain is found at 378 to 442; it reads RRMVGSTQRI…PHSLRGTLIE (65 aa).

The protein belongs to the methylthiotransferase family. MiaB subfamily. In terms of assembly, monomer. The cofactor is [4Fe-4S] cluster.

It is found in the cytoplasm. It catalyses the reaction N(6)-dimethylallyladenosine(37) in tRNA + (sulfur carrier)-SH + AH2 + 2 S-adenosyl-L-methionine = 2-methylsulfanyl-N(6)-dimethylallyladenosine(37) in tRNA + (sulfur carrier)-H + 5'-deoxyadenosine + L-methionine + A + S-adenosyl-L-homocysteine + 2 H(+). In terms of biological role, catalyzes the methylthiolation of N6-(dimethylallyl)adenosine (i(6)A), leading to the formation of 2-methylthio-N6-(dimethylallyl)adenosine (ms(2)i(6)A) at position 37 in tRNAs that read codons beginning with uridine. In Pseudomonas paraeruginosa (strain DSM 24068 / PA7) (Pseudomonas aeruginosa (strain PA7)), this protein is tRNA-2-methylthio-N(6)-dimethylallyladenosine synthase.